A 189-amino-acid polypeptide reads, in one-letter code: Large ribosomal subunit protein bL17 (189 aa).

Belongs to the bacterial ribosomal protein bL17 family. Part of the 50S ribosomal subunit. Contacts protein L32.

This Rhodococcus jostii (strain RHA1) protein is Large ribosomal subunit protein bL17.